Consider the following 295-residue polypeptide: Cyclin-G1 (295 aa).

Belongs to the cyclin family. Cyclin G subfamily.

The protein resides in the nucleus. Functionally, may play a role in growth regulation. Is associated with G2/M phase arrest in response to DNA damage. May be an intermediate by which p53 mediates its role as an inhibitor of cellular proliferation. This Bos taurus (Bovine) protein is Cyclin-G1 (CCNG1).